Here is a 567-residue protein sequence, read N- to C-terminus: TNF receptor-associated factor 3 (567 aa).

Residues 1-26 (MESSKKMDAAGTLQPNPPLKLQPDRG) form a disordered region. Cys-55 participates in a covalent cross-link: Glycyl cysteine thioester (Cys-Gly) (interchain with G-Cter in ubiquitin). An RING-type zinc finger spans residues 67–76 (CGHRFCESCM). Residue Lys-106 forms a Glycyl lysine isopeptide (Lys-Gly) (interchain with G-Cter in ubiquitin) linkage. A Glycyl cysteine thioester (Cys-Gly) (interchain with G-Cter in ubiquitin) cross-link involves residue Cys-123. TRAF-type zinc fingers lie at residues 134–189 (VHLK…IKLQ) and 190–248 (KHED…QQIK). Glycyl lysine isopeptide (Lys-Gly) (interchain with G-Cter in ubiquitin) cross-links involve residues Lys-155 and Lys-167. The stretch at 266–337 (SNSLEKKVSL…KLKELDKEIR (72 aa)) forms a coiled coil. Residue Lys-328 forms a Glycyl lysine isopeptide (Lys-Gly) (interchain with G-Cter in ubiquitin) linkage. An MATH domain is found at 414–559 (NGVLIWKIRD…DDTIFIKVIV (146 aa)).

This sequence belongs to the TNF receptor-associated factor family. A subfamily. As to quaternary structure, homotrimer. Heterotrimer with TRAF2 and TRAF5. Interacts with LTBR/TNFRSF3, TNFRSF4, TNFRSF5/CD40, TNFRSF8/CD30, TNFRSF13C TNFRSF17/BCMA, TLR4 and EDAR. Interacts with MAP3K5, MAP3K14, TRAIP/TRIP, TDP2/TTRAP, TANK/ITRAF and TRAF3IP1. Interaction with TNFRSF5/CD40 is modulated by TANK/ITRAF, which competes for the same binding site. Interacts with TICAM1. Interacts with TRAFD1. Interacts with OTUB1, OTUB2 and OTUD5. Interacts with RNF216, OPTN and TBK1. Identified in a complex with TRAF2, MAP3K14 and BIRC3. Upon exposure to bacterial lipopolysaccharide (LPS), recruited to a transient complex containing TLR4, TRAF3, TRAF6, IKBKG, MAP3K7, MYD88, TICAM1, BIRC2, BIRC3 and UBE2N. Interacts (via RING-type zinc finger domain) with SRC. Interacts with CARD14. Interacts (via MATH domain) with PTPN22; the interaction promotes TRAF3 polyubiquitination. Interacts with MAVS. Directly interacts with DDX3X; this interaction stimulates TRAF3 'Lys-63' ubiquitination. Interacts with IRF3. Interacts with IKBKE in the course of viral infection. Interacts with TRIM35. Interacts with GAPDH; promoting TRAF3 ubiquitination. Interacts with PPP3CA and PPP3CB. Interacts with RALGDS. Interacts with FBXO11. Post-translationally, undergoes 'Lys-48'-linked polyubiquitination, leading to its proteasomal degradation in response to signaling by TNFSF13B, TLR4 or through CD40. 'Lys-48'-linked polyubiquitinated form is deubiquitinated by OTUD7B, preventing TRAF3 proteolysis and over-activation of non-canonical NF-kappa-B. Undergoes 'Lys-63'-linked ubiquitination during early stages of virus infection, and 'Lys-48'-linked ubiquitination during later stages. Undergoes both 'Lys-48'-linked and 'Lys-63'-linked ubiquitination in response to TLR3 and TLR4 signaling. 'Lys-63'-linked ubiquitination can be mediated by TRIM35. Deubiquitinated by OTUB1, OTUB2 and OTUD5. Undergoes 'Lys-63'-linked deubiquitination by MYSM1 to terminate the pattern-recognition receptors/PRRs pathways. Ubiquitinated at Lys-328 by the SCF(FBXL2) complex, leading to its degradation by the proteasome. In terms of processing, undergoes 'Lys-48'-linked polyubiquitination, leading to its proteasomal degradation in response to signaling by TNFSF13B, TLR4 or through CD40. 'Lys-48'-linked polyubiquitinated form is deubiquitinated by OTUD7B, preventing TRAF3 proteolysis and over-activation of non-canonical NF-kappa-B. Undergoes 'Lys-63'-linked ubiquitination during early stages of virus infection, and 'Lys-48'-linked ubiquitination during later stages. Undergoes both 'Lys-48'-linked and 'Lys-63'-linked ubiquitination in response to TLR3 and TLR4 signaling. 'Lys-63'-linked ubiquitination can be mediated by TRIM35. Deubiquitinated by OTUB1, OTUB2 and OTUD5. Undergoes 'Lys-63'-linked deubiquitination by MYSM1 to terminate the pattern-recognition receptors/PRRs pathways. Also undergoes 'Lys-29'-linked ubiquitination on Cys-55 and Cys-123 by NEDD4L; leading to increased 'Lys-48'- and 'Lys-63'-linked ubiquitination as well as increased binding to TBK1. TLR4 signals emanating from bacteria containing vesicles trigger 'Lys-33'-linked polyubiquitination that promotes the assembly of the exocyst complex thereby connecting innate immune signaling to the cellular trafficking apparatus. Deubiquitinated by USP25 during viral infection, leading to TRAF3 stabilization and type I interferon production. 'Lys-63'-linked ubiquitination by FBXO11 in a NEDD8-dependent manner promotes the amplification of IFN-I signaling. Detected in bone marrow macrophages and spleen B-cells (at protein level). In adult, highest in brain. Also found in kidney, heart, thymus, spleen, lung, muscle, testis and ovary. Not found in liver.

It is found in the cytoplasm. Its subcellular location is the endosome. The protein localises to the mitochondrion. The catalysed reaction is S-ubiquitinyl-[E2 ubiquitin-conjugating enzyme]-L-cysteine + [acceptor protein]-L-lysine = [E2 ubiquitin-conjugating enzyme]-L-cysteine + N(6)-ubiquitinyl-[acceptor protein]-L-lysine.. Functionally, cytoplasmic E3 ubiquitin ligase that regulates various signaling pathways, such as the NF-kappa-B, mitogen-activated protein kinase (MAPK) and interferon regulatory factor (IRF) pathways, and thus controls a lot of biological processes in both immune and non-immune cell types. In TLR and RLR signaling pathways, acts as an E3 ubiquitin ligase promoting the synthesis of 'Lys-63'-linked polyubiquitin chains on several substrates such as ASC that lead to the activation of the type I interferon response or the inflammasome. Following the activation of certain TLRs such as TLR4, acts as a negative NF-kappa-B regulator, possibly to avoid unregulated inflammatory response, and its degradation via 'Lys-48'-linked polyubiquitination is required for MAPK activation and production of inflammatory cytokines. Alternatively, when TLR4 orchestrates bacterial expulsion, TRAF3 undergoes 'Lys-33'-linked polyubiquitination and subsequently binds to RALGDS, mobilizing the exocyst complex to rapidly expel intracellular bacteria back for clearance. Also acts as a constitutive negative regulator of the alternative NF-kappa-B pathway, which controls B-cell survival and lymphoid organ development. Required for normal antibody isotype switching from IgM to IgG. Plays a role T-cell dependent immune responses. Down-regulates proteolytic processing of NFKB2, and thereby inhibits non-canonical activation of NF-kappa-B. Promotes ubiquitination and proteasomal degradation of MAP3K14. The chain is TNF receptor-associated factor 3 from Mus musculus (Mouse).